A 152-amino-acid polypeptide reads, in one-letter code: Globin, minor (152 aa).

In terms of domain architecture, Globin spans 12-152 (VNNSYHKDLL…ALIAVVQAAL (141 aa)). Residue histidine 104 coordinates heme b.

Belongs to the globin family.

The chain is Globin, minor from Anadara trapezia (Sydney cockle).